Consider the following 152-residue polypeptide: Ribosome maturation factor RimP (152 aa).

This sequence belongs to the RimP family.

The protein localises to the cytoplasm. Required for maturation of 30S ribosomal subunits. This is Ribosome maturation factor RimP from Desulfitobacterium hafniense (strain DSM 10664 / DCB-2).